The following is a 269-amino-acid chain: 3-methyl-2-oxobutanoate hydroxymethyltransferase (269 aa).

Mg(2+) contacts are provided by Asp43 and Asp82. 3-methyl-2-oxobutanoate is bound by residues 43-44 (DS), Asp82, and Lys110. Residue Glu112 coordinates Mg(2+). Residue Glu179 is the Proton acceptor of the active site.

It belongs to the PanB family. In terms of assembly, homodecamer; pentamer of dimers. It depends on Mg(2+) as a cofactor.

The protein resides in the cytoplasm. It carries out the reaction 3-methyl-2-oxobutanoate + (6R)-5,10-methylene-5,6,7,8-tetrahydrofolate + H2O = 2-dehydropantoate + (6S)-5,6,7,8-tetrahydrofolate. Its pathway is cofactor biosynthesis; (R)-pantothenate biosynthesis; (R)-pantoate from 3-methyl-2-oxobutanoate: step 1/2. Catalyzes the reversible reaction in which hydroxymethyl group from 5,10-methylenetetrahydrofolate is transferred onto alpha-ketoisovalerate to form ketopantoate. This Acinetobacter baylyi (strain ATCC 33305 / BD413 / ADP1) protein is 3-methyl-2-oxobutanoate hydroxymethyltransferase.